The following is an 825-amino-acid chain: AP-3 complex subunit delta (825 aa).

HEAT repeat units lie at residues 131 to 168, 169 to 205, 207 to 243, 244 to 281, 285 to 323, 324 to 360, 363 to 400, 469 to 513, 515 to 547, and 548 to 584; these read GLAR…QYPE, AISA…RAPK, YLEF…YEPR, LVKK…LVGH, DKLA…THPS, LVSA…KENI, IVKT…KSTY, EKRT…LAHR, LLQA…LWVE, and KIVS…IVNT. Positions 787–825 are disordered; that stretch reads STNQGSMGDIVLETKSPIRVEKKKSKKKKKKKEKTSGKE. Residues 807 to 819 show a composition bias toward basic residues; sequence EKKKSKKKKKKKE.

This sequence belongs to the adaptor complexes large subunit family. In terms of assembly, adaptor protein complex 3 (AP-3) is a heterotetramer composed of 2 large adaptins (apl5 and apl6), a medium adaptin (apm3) and a small adaptin (aps3).

The protein localises to the golgi apparatus. It localises to the cytoplasmic vesicle. Its subcellular location is the clathrin-coated vesicle membrane. In terms of biological role, part of the AP-3 complex, an adaptor-related complex which is not clathrin-associated. The complex is associated with the Golgi region as well as more peripheral structures. It facilitates the budding of vesicles from the Golgi membrane and may be directly involved in trafficking to the vacuole. In Schizosaccharomyces pombe (strain 972 / ATCC 24843) (Fission yeast), this protein is AP-3 complex subunit delta (apl5).